The sequence spans 182 residues: ATP synthase subunit b, chloroplastic (182 aa).

Residues 36–56 (ILLLLLGLMYVLKEFLGSILV) form a helical membrane-spanning segment.

The protein belongs to the ATPase B chain family. F-type ATPases have 2 components, F(1) - the catalytic core - and F(0) - the membrane proton channel. F(1) has five subunits: alpha(3), beta(3), gamma(1), delta(1), epsilon(1). F(0) has four main subunits: a(1), b(1), b'(1) and c(10-14). The alpha and beta chains form an alternating ring which encloses part of the gamma chain. F(1) is attached to F(0) by a central stalk formed by the gamma and epsilon chains, while a peripheral stalk is formed by the delta, b and b' chains.

The protein localises to the plastid. Its subcellular location is the chloroplast thylakoid membrane. Its function is as follows. F(1)F(0) ATP synthase produces ATP from ADP in the presence of a proton or sodium gradient. F-type ATPases consist of two structural domains, F(1) containing the extramembraneous catalytic core and F(0) containing the membrane proton channel, linked together by a central stalk and a peripheral stalk. During catalysis, ATP synthesis in the catalytic domain of F(1) is coupled via a rotary mechanism of the central stalk subunits to proton translocation. Functionally, component of the F(0) channel, it forms part of the peripheral stalk, linking F(1) to F(0). In Gracilaria tenuistipitata var. liui (Red alga), this protein is ATP synthase subunit b, chloroplastic.